The sequence spans 853 residues: DNA mismatch repair protein MutS (853 aa).

An ATP-binding site is contributed by 614–621 (GPNMGGKS).

Belongs to the DNA mismatch repair MutS family.

This protein is involved in the repair of mismatches in DNA. It is possible that it carries out the mismatch recognition step. This protein has a weak ATPase activity. This Escherichia coli O6:H1 (strain CFT073 / ATCC 700928 / UPEC) protein is DNA mismatch repair protein MutS.